The chain runs to 306 residues: MMALGVPPPPSRAYVSGPLRDDDTFGGDRVRRRRRWLKEQCPAIIVHGGGRRGGVGHRALAAGVSKMRLPALNAATHRIPSTSPLSIPQTLTITRDPPYPMLPRSHGHRTGGGGFSLKSSPFSSVGEERVPDPKPRRNPRPEQIRILEAIFNSGMVNPPRDEIPRIRMQLQEYGQVGDANVFYWFQNRKSRSKNKLRSGGTGRAGLGLGGNRASEPPAAATAHREAVAPSFTPPPILPPQPVQPQQQLVSPVAAPTSLSSSSSDRSSGSSKPARATLTQAMSVTAAMDLLSPLRRSARPRQEQRHV.

The segment covering 1–11 (MMALGVPPPPS) has biased composition (pro residues). Disordered regions lie at residues 1-20 (MMAL…GPLR), 103-142 (PRSH…PRPE), and 190-276 (SRSK…ARAT). Basic and acidic residues predominate over residues 126-142 (GEERVPDPKPRRNPRPE). A DNA-binding region (homeobox; WUS-type) is located at residues 132–196 (DPKPRRNPRP…NRKSRSKNKL (65 aa)). A compositionally biased stretch (gly residues) spans 199-210 (GGTGRAGLGLGG). A compositionally biased stretch (pro residues) spans 231–242 (FTPPPILPPQPV). Positions 243 to 270 (QPQQQLVSPVAAPTSLSSSSSDRSSGSS) are enriched in low complexity.

The protein belongs to the WUS homeobox family.

It localises to the nucleus. Functionally, transcription factor which may be involved in developmental processes. This is WUSCHEL-related homeobox 13 (WOX13) from Oryza sativa subsp. japonica (Rice).